A 331-amino-acid chain; its full sequence is Glyceraldehyde-3-phosphate dehydrogenase (331 aa).

NAD(+) is bound by residues 12–13, Asp34, Arg78, and Thr120; that span reads RI. D-glyceraldehyde 3-phosphate contacts are provided by residues 149-151, Thr180, 209-210, and Arg232; these read SCT and TG. Cys150 serves as the catalytic Nucleophile. Asn314 contacts NAD(+).

This sequence belongs to the glyceraldehyde-3-phosphate dehydrogenase family. In terms of assembly, homotetramer.

The protein localises to the cytoplasm. The catalysed reaction is D-glyceraldehyde 3-phosphate + phosphate + NAD(+) = (2R)-3-phospho-glyceroyl phosphate + NADH + H(+). Its pathway is carbohydrate degradation; glycolysis; pyruvate from D-glyceraldehyde 3-phosphate: step 1/5. Functionally, catalyzes the oxidative phosphorylation of glyceraldehyde 3-phosphate (G3P) to 1,3-bisphosphoglycerate (BPG) using the cofactor NAD. The first reaction step involves the formation of a hemiacetal intermediate between G3P and a cysteine residue, and this hemiacetal intermediate is then oxidized to a thioester, with concomitant reduction of NAD to NADH. The reduced NADH is then exchanged with the second NAD, and the thioester is attacked by a nucleophilic inorganic phosphate to produce BPG. The polypeptide is Glyceraldehyde-3-phosphate dehydrogenase (gapA) (Salmonella typhi).